The sequence spans 834 residues: Serine/threonine-protein kinase TNNI3K (834 aa).

A lipid anchor (N-myristoyl glycine) is attached at Gly2. Residues Ser21–Phe49 adopt a coiled-coil conformation. ANK repeat units follow at residues Arg66–Arg96, Asn100–Gln129, Gly133–Val162, Val166–Val195, Val199–Ala229, Glu233–Pro262, Tyr268–Leu297, Phe303–His334, Asp338–Leu367, and Asp380–Glu409. The Protein kinase domain occupies Ile462 to Leu722. ATP is bound by residues Ile468–Val476 and Lys489. The active-site Proton acceptor is the Asp587. Residues Pro815–Asn834 form a disordered region.

The protein belongs to the protein kinase superfamily. TKL Ser/Thr protein kinase family. MAP kinase kinase kinase subfamily. Interacts with TNNI3, ACTC, ACTA1, MYBPC3, AIP, FABP3 and HADHB. The cofactor is Mg(2+). Autophosphorylated.

It localises to the nucleus. The protein resides in the cytoplasm. The catalysed reaction is L-seryl-[protein] + ATP = O-phospho-L-seryl-[protein] + ADP + H(+). The enzyme catalyses L-threonyl-[protein] + ATP = O-phospho-L-threonyl-[protein] + ADP + H(+). May play a role in cardiac physiology. The protein is Serine/threonine-protein kinase TNNI3K of Mus musculus (Mouse).